We begin with the raw amino-acid sequence, 49 residues long: uncharacterized protein (49 aa).

The helical transmembrane segment at Ala22 to Tyr42 threads the bilayer.

It localises to the membrane. This is an uncharacterized protein from Methanocaldococcus jannaschii (strain ATCC 43067 / DSM 2661 / JAL-1 / JCM 10045 / NBRC 100440) (Methanococcus jannaschii).